Reading from the N-terminus, the 427-residue chain is Trigger factor (427 aa).

Residues 163–248 (GDTVILDFEG…LHEIKTKEVP (86 aa)) enclose the PPIase FKBP-type domain.

This sequence belongs to the FKBP-type PPIase family. Tig subfamily.

Its subcellular location is the cytoplasm. It carries out the reaction [protein]-peptidylproline (omega=180) = [protein]-peptidylproline (omega=0). Involved in protein export. Acts as a chaperone by maintaining the newly synthesized protein in an open conformation. Functions as a peptidyl-prolyl cis-trans isomerase. This is Trigger factor from Listeria monocytogenes serotype 4b (strain CLIP80459).